Here is a 315-residue protein sequence, read N- to C-terminus: Acetyl-coenzyme A carboxylase carboxyl transferase subunit alpha (315 aa).

The CoA carboxyltransferase C-terminal domain occupies 39-292 (LEDKSAKLLR…GDALEQELNG (254 aa)).

Belongs to the AccA family. In terms of assembly, acetyl-CoA carboxylase is a heterohexamer composed of biotin carboxyl carrier protein (AccB), biotin carboxylase (AccC) and two subunits each of ACCase subunit alpha (AccA) and ACCase subunit beta (AccD).

The protein localises to the cytoplasm. It carries out the reaction N(6)-carboxybiotinyl-L-lysyl-[protein] + acetyl-CoA = N(6)-biotinyl-L-lysyl-[protein] + malonyl-CoA. It participates in lipid metabolism; malonyl-CoA biosynthesis; malonyl-CoA from acetyl-CoA: step 1/1. In terms of biological role, component of the acetyl coenzyme A carboxylase (ACC) complex. First, biotin carboxylase catalyzes the carboxylation of biotin on its carrier protein (BCCP) and then the CO(2) group is transferred by the carboxyltransferase to acetyl-CoA to form malonyl-CoA. In Sphingopyxis alaskensis (strain DSM 13593 / LMG 18877 / RB2256) (Sphingomonas alaskensis), this protein is Acetyl-coenzyme A carboxylase carboxyl transferase subunit alpha.